Consider the following 235-residue polypeptide: Ribonuclease 3 (235 aa).

In terms of domain architecture, RNase III spans 6-131; that stretch reads IDQLKKLTGH…LIAVIYLDGG (126 aa). Glutamate 44 provides a ligand contact to Mg(2+). Aspartate 48 is a catalytic residue. Residues aspartate 117 and glutamate 120 each coordinate Mg(2+). Glutamate 120 is a catalytic residue. Residues 156–225 form the DRBM domain; sequence DAKTELQEWA…AEKILRREGM (70 aa).

It belongs to the ribonuclease III family. Homodimer. Mg(2+) serves as cofactor.

It localises to the cytoplasm. The enzyme catalyses Endonucleolytic cleavage to 5'-phosphomonoester.. Digests double-stranded RNA. Involved in the processing of primary rRNA transcript to yield the immediate precursors to the large and small rRNAs (23S and 16S). Processes some mRNAs, and tRNAs when they are encoded in the rRNA operon. Processes pre-crRNA and tracrRNA of type II CRISPR loci if present in the organism. The sequence is that of Ribonuclease 3 from Bartonella bacilliformis (strain ATCC 35685 / KC583 / Herrer 020/F12,63).